Consider the following 1061-residue polypeptide: Zinc finger protein ZFPM1 (1061 aa).

A CCHC FOG-type 1 zinc finger spans residues V152–Q185. Residues C160, C163, H176, and C181 each contribute to the Zn(2+) site. 3 C2H2-type zinc fingers span residues R204–H228, F234–H256, and G262–H285. Disordered stretches follow at residues P349 to T393 and T435 to T455. Over residues S378–S388 the composition is skewed to low complexity. A compositionally biased stretch (polar residues) spans E436 to P448. The segment at S508–H541 adopts a CCHC FOG-type 2 zinc-finger fold. Zn(2+) contacts are provided by C516, C519, H532, and C537. Disordered stretches follow at residues A561 to A586 and M599 to V630. The segment covering G565–S574 has biased composition (polar residues). The CCHC FOG-type 3 zinc-finger motif lies at E623–H656. Zn(2+) is bound by residues C631, C634, H647, and C652. A disordered region spans residues R661–R681. An interaction with CTBP region spans residues P736–K742. The CCHC FOG-type 4 zinc-finger motif lies at A759 to P792. Zn(2+) is bound by residues C767, C770, H783, and C788. A C2H2-type 4 zinc finger spans residues T869–H892. Positions R917–S1021 are disordered. Composition is skewed to low complexity over residues V933–P942 and T954–R972. A compositionally biased stretch (pro residues) spans P973–N984. A CCHC FOG-type 5 zinc finger spans residues V1023–A1056. Zn(2+) is bound by residues C1031, C1034, H1047, and C1052.

The protein belongs to the FOG (Friend of GATA) family. As to quaternary structure, interacts with corepressor CTBP. Interacts with the N-terminal zinc-finger of GATA1 and probably GATA2. Predominantly expressed in heart and brain. Also expressed in ventral blood island and adult spleen.

It is found in the nucleus. Its function is as follows. Transcription regulator that plays an central role in red blood cell differentiation. Essential cofactor that acts via the formation of a heterodimer with transcription factors of the GATA family GATA1 and GATA2. Such heterodimer can both activate or repress transcriptional activity, depending on the cell and promoter context. Acts as a repressor of red blood cells, probably by modulating activity of GATA1. This is Zinc finger protein ZFPM1 (zfpm1) from Xenopus laevis (African clawed frog).